Consider the following 212-residue polypeptide: Proteasome subunit beta 2 (212 aa).

A propeptide spans 1-15 (MLHHPGTGQLRALKG) (removed in mature form; by autocatalysis). Catalysis depends on threonine 16, which acts as the Nucleophile.

The protein belongs to the peptidase T1B family. In terms of assembly, the 20S proteasome core is composed of 14 alpha and 14 beta subunits that assemble into four stacked heptameric rings, resulting in a barrel-shaped structure. The two inner rings, each composed of seven catalytic beta subunits, are sandwiched by two outer rings, each composed of seven alpha subunits. The catalytic chamber with the active sites is on the inside of the barrel. Has a gated structure, the ends of the cylinder being occluded by the N-termini of the alpha-subunits. Is capped at one or both ends by the proteasome regulatory ATPase, PAN.

It is found in the cytoplasm. The catalysed reaction is Cleavage of peptide bonds with very broad specificity.. Its activity is regulated as follows. The formation of the proteasomal ATPase PAN-20S proteasome complex, via the docking of the C-termini of PAN into the intersubunit pockets in the alpha-rings, triggers opening of the gate for substrate entry. Interconversion between the open-gate and close-gate conformations leads to a dynamic regulation of the 20S proteasome proteolysis activity. In terms of biological role, component of the proteasome core, a large protease complex with broad specificity involved in protein degradation. The protein is Proteasome subunit beta 2 of Hyperthermus butylicus (strain DSM 5456 / JCM 9403 / PLM1-5).